The primary structure comprises 747 residues: Meprin A subunit alpha (747 aa).

An N-terminal signal peptide occupies residues M1–A20. A propeptide spanning residues V21 to R64 is cleaved from the precursor. N28 and N139 each carry an N-linked (GlcNAc...) asparagine glycan. Residues N65–T259 form the Peptidase M12A domain. The Extracellular portion of the chain corresponds to N65 to M713. Disulfide bonds link C106/C258, C127/C146, and C268/C430. H154 contacts Zn(2+). E155 is a catalytic residue. Positions 158 and 164 each coordinate Zn(2+). Residues N221, N257, N317, N413, N439, N533, and N540 are each glycosylated (N-linked (GlcNAc...) asparagine). The MAM domain occupies T263 to A432. An MATH domain is found at G433–F594. Positions E638–E663 are disordered. The EGF-like domain occupies F671 to Q711. 3 disulfide bridges follow: C675–C686, C680–C695, and C697–C710. The helical transmembrane segment at H714–T741 threads the bilayer. Over N742–Q747 the chain is Cytoplasmic.

Homotetramer consisting of disulfide-linked alpha subunits, homooligomer consisting of disulfide-linked alpha subunit homodimers, or heterotetramer of two alpha and two beta subunits formed by non-covalent association of two disulfide-linked heterodimers. Genetic factors determine which oligomer(s) will be formed (strain-specific). Interacts with MBL2 through its carbohydrate moiety. This interaction may inhibit its catalytic activity. The cofactor is Zn(2+). Post-translationally, N-glycosylated; contains GlcNAc, galactose, mannose and a small amount of fucose. In terms of tissue distribution, kidney, intestinal brush borders and salivary ducts.

It is found in the membrane. It catalyses the reaction Hydrolysis of protein and peptide substrates preferentially on carboxyl side of hydrophobic residues.. With respect to regulation, inhibited by metal ion chelators EDTA and 1,10-phenanthroline, bradykinin analogs, cysteine, CONA65, and several hydroxamate compounds, particularly tyrosine hydroxamate. Not inhibited by 3,4-dichloroisocourmarin, soybean trypsin inhibitor, or the cysteine proteinase inhibitors iodoacetic acid and E-64. The chain is Meprin A subunit alpha (Mep1a) from Mus musculus (Mouse).